The following is a 1414-amino-acid chain: Phenyloxazoline synthase MbtB (1414 aa).

Residues 5–78 (TACSEIIRAE…AWSQLVSAGT (74 aa)) form the Carrier 1 domain. The residue at position 39 (Ser39) is an O-(pantetheine 4'-phosphoryl)serine. Residues 96–394 (EGEPFPLAPM…SSLLLDVDLT (299 aa)) form a condensation/cyclization region. The interval 579–975 (SYAQLRDQAS…RLPGVHAAAA (397 aa)) is adenylation. In terms of domain architecture, Carrier 2 spans 1057-1135 (APRTVLQRAL…ALAQLLTGRE (79 aa)). Ser1094 is modified (O-(pantetheine 4'-phosphoryl)serine). Positions 1188–1413 (GAVLVFPHAG…AVARMVSADV (226 aa)) are thioesterase.

This sequence belongs to the ATP-dependent AMP-binding enzyme family. MbtB subfamily. Pantetheine 4'-phosphate is required as a cofactor. 4'-phosphopantetheine is transferred from CoA to a specific serine in each of the two carrier protein domains, leading to their activation from apo to holo forms.

It functions in the pathway siderophore biosynthesis; mycobactin biosynthesis. Functionally, involved in the initial steps of the mycobactin biosynthetic pathway. Putatively couples activated salicylic acid with serine or threonine and cyclizes this precursor to the hydroxyphenyloxazoline ring system present in this class of siderophores. In Mycobacterium bovis (strain ATCC BAA-935 / AF2122/97), this protein is Phenyloxazoline synthase MbtB (mbtB).